We begin with the raw amino-acid sequence, 103 residues long: Small ribosomal subunit protein uS10 (103 aa).

Belongs to the universal ribosomal protein uS10 family. As to quaternary structure, part of the 30S ribosomal subunit.

Involved in the binding of tRNA to the ribosomes. The polypeptide is Small ribosomal subunit protein uS10 (Methylibium petroleiphilum (strain ATCC BAA-1232 / LMG 22953 / PM1)).